The sequence spans 637 residues: DNA gyrase subunit B (637 aa).

A Toprim domain is found at 421-535; it reads SEIYIVEGDS…HGYVYIAQPP (115 aa). Glu-427, Asp-500, and Asp-502 together coordinate Mg(2+).

This sequence belongs to the type II topoisomerase GyrB family. Heterotetramer, composed of two GyrA and two GyrB chains. In the heterotetramer, GyrA contains the active site tyrosine that forms a transient covalent intermediate with DNA, while GyrB binds cofactors and catalyzes ATP hydrolysis. Requires Mg(2+) as cofactor. It depends on Mn(2+) as a cofactor. Ca(2+) serves as cofactor.

Its subcellular location is the cytoplasm. It catalyses the reaction ATP-dependent breakage, passage and rejoining of double-stranded DNA.. Functionally, a type II topoisomerase that negatively supercoils closed circular double-stranded (ds) DNA in an ATP-dependent manner to modulate DNA topology and maintain chromosomes in an underwound state. Negative supercoiling favors strand separation, and DNA replication, transcription, recombination and repair, all of which involve strand separation. Also able to catalyze the interconversion of other topological isomers of dsDNA rings, including catenanes and knotted rings. Type II topoisomerases break and join 2 DNA strands simultaneously in an ATP-dependent manner. The sequence is that of DNA gyrase subunit B from Halalkalibacterium halodurans (strain ATCC BAA-125 / DSM 18197 / FERM 7344 / JCM 9153 / C-125) (Bacillus halodurans).